The sequence spans 435 residues: Tumor necrosis factor receptor superfamily member 3 (435 aa).

A signal peptide spans 1–30; the sequence is MLLPWATSAPGLAWGPLVLGLFGLLAASQP. The Extracellular segment spans residues 31-227; it reads QAVPPYASEN…PPEMSGTMLM (197 aa). Asn-40 carries N-linked (GlcNAc...) asparagine glycosylation. TNFR-Cys repeat units lie at residues 42–81, 82–124, 125–168, and 169–211; these read TCRDQEKEYYEPQHRICCSRCPPGTYVSAKCSRIRDTVCA, TCAE…KTQC, RCQP…NHCV, and PCKA…TTCK. Intrachain disulfides connect Cys-43/Cys-58, Cys-59/Cys-72, Cys-62/Cys-80, Cys-83/Cys-98, Cys-101/Cys-116, Cys-104/Cys-124, Cys-126/Cys-132, Cys-139/Cys-148, Cys-142/Cys-167, and Cys-170/Cys-185. Asn-177 carries N-linked (GlcNAc...) asparagine glycosylation. A helical membrane pass occupies residues 228 to 248; the sequence is LAVLLPLAFFLLLATVFSCIW. The Cytoplasmic portion of the chain corresponds to 249–435; the sequence is KSHPSLCRKL…GPRNQFITHD (187 aa). Ser-323 bears the Phosphoserine mark. The segment covering 373 to 399 has biased composition (pro residues); it reads PGPGDLPATPEPPYPIPEEGDPGPPGL. The disordered stretch occupies residues 373–435; sequence PGPGDLPATP…GPRNQFITHD (63 aa). Over residues 403–417 the composition is skewed to basic and acidic residues; that stretch reads HQEDGKAWHLAETEH. The span at 421-435 shows a compositional bias: polar residues; that stretch reads TPSNRGPRNQFITHD.

Self-associates; dimerization and trimerization are promoted by lymphotoxin (LTA(1)-LTB(2)). Associates with TRAF3. Associates with TRAF4. Associates with TRAF5. Interacts with Aedes aegypti lymphotoxin beta receptor inhibitor; the interaction reduces dimerization and trimerization of LTBR induced by lymphotoxin (LTA(1)-LTB(2)). In terms of assembly, (Microbial infection) Interacts with HCV core protein.

It is found in the membrane. Functionally, receptor for the heterotrimeric lymphotoxin containing LTA and LTB, and for TNFS14/LIGHT. Activates NF-kappa-B signaling pathway upon stimulation with lymphotoxin (LTA(1)-LTB(2)). Promotes apoptosis via TRAF3 and TRAF5. May play a role in the development of lymphoid organs. This chain is Tumor necrosis factor receptor superfamily member 3 (LTBR), found in Homo sapiens (Human).